Reading from the N-terminus, the 396-residue chain is Tryptophan synthase beta chain (396 aa).

Lys88 carries the post-translational modification N6-(pyridoxal phosphate)lysine.

It belongs to the TrpB family. As to quaternary structure, tetramer of two alpha and two beta chains. The cofactor is pyridoxal 5'-phosphate.

The catalysed reaction is (1S,2R)-1-C-(indol-3-yl)glycerol 3-phosphate + L-serine = D-glyceraldehyde 3-phosphate + L-tryptophan + H2O. It participates in amino-acid biosynthesis; L-tryptophan biosynthesis; L-tryptophan from chorismate: step 5/5. The beta subunit is responsible for the synthesis of L-tryptophan from indole and L-serine. In Actinobacillus pleuropneumoniae serotype 7 (strain AP76), this protein is Tryptophan synthase beta chain.